The following is a 330-amino-acid chain: Electron transfer flavoprotein subunit alpha (330 aa).

FAD is bound at residue Leu-270–Asn-298.

This sequence belongs to the ETF alpha-subunit/FixB family. Heterodimer of an alpha and a beta subunit. The cofactor is FAD.

Its function is as follows. The electron transfer flavoprotein serves as a specific electron acceptor for other dehydrogenases. It transfers the electrons to the main respiratory chain via ETF-ubiquinone oxidoreductase (ETF dehydrogenase). This Thermoanaerobacterium thermosaccharolyticum (strain ATCC 7956 / DSM 571 / NCIMB 9385 / NCA 3814 / NCTC 13789 / WDCM 00135 / 2032) (Clostridium thermosaccharolyticum) protein is Electron transfer flavoprotein subunit alpha (etfA).